A 482-amino-acid chain; its full sequence is tRNA sulfurtransferase (482 aa).

The THUMP domain occupies 61 to 165; sequence LAIRDALTRI…DDRLLLIKGR (105 aa). Residues 183–184, K265, G287, and Q296 contribute to the ATP site; that span reads LI. The cysteines at positions 344 and 456 are disulfide-linked. The Rhodanese domain maps to 404–482; the sequence is FGANDVILDI…GFANVKVYRP (79 aa). Residue C456 is the Cysteine persulfide intermediate of the active site.

Belongs to the ThiI family.

The protein localises to the cytoplasm. The enzyme catalyses [ThiI sulfur-carrier protein]-S-sulfanyl-L-cysteine + a uridine in tRNA + 2 reduced [2Fe-2S]-[ferredoxin] + ATP + H(+) = [ThiI sulfur-carrier protein]-L-cysteine + a 4-thiouridine in tRNA + 2 oxidized [2Fe-2S]-[ferredoxin] + AMP + diphosphate. It catalyses the reaction [ThiS sulfur-carrier protein]-C-terminal Gly-Gly-AMP + S-sulfanyl-L-cysteinyl-[cysteine desulfurase] + AH2 = [ThiS sulfur-carrier protein]-C-terminal-Gly-aminoethanethioate + L-cysteinyl-[cysteine desulfurase] + A + AMP + 2 H(+). The protein operates within cofactor biosynthesis; thiamine diphosphate biosynthesis. Functionally, catalyzes the ATP-dependent transfer of a sulfur to tRNA to produce 4-thiouridine in position 8 of tRNAs, which functions as a near-UV photosensor. Also catalyzes the transfer of sulfur to the sulfur carrier protein ThiS, forming ThiS-thiocarboxylate. This is a step in the synthesis of thiazole, in the thiamine biosynthesis pathway. The sulfur is donated as persulfide by IscS. The sequence is that of tRNA sulfurtransferase from Salmonella typhi.